The sequence spans 409 residues: Alpha-1-antitrypsin (409 aa).

The signal sequence occupies residues 1-15 (LLLAGLCCLLPGSLA). The segment at 18-39 (PQGDAAQKTDTPPHDQNHPTLN) is disordered. Residues Asn61, Asn98, Asn136, and Asn262 are each glycosylated (N-linked (GlcNAc...) asparagine). Residues 364 to 383 (GAMFLEAIPMSIPPEVKFNK) are RCL. Phosphoserine is present on Ser374.

This sequence belongs to the serpin family. Interacts with CELA2A. Interacts with ERGIC3 and LMAN1/ERGIC53. Interacts with PRSS1/Trypsin. In terms of tissue distribution, plasma.

The protein localises to the secreted. Its function is as follows. Inhibitor of serine proteases. Its primary target is elastase, but it also has a moderate affinity for plasmin and thrombin. Inhibits trypsin, chymotrypsin and plasminogen activator. This chain is Alpha-1-antitrypsin (SERPINA1), found in Papio anubis (Olive baboon).